The following is a 219-amino-acid chain: Holliday junction branch migration complex subunit RuvA (219 aa).

The interval 1–71 is domain I; the sequence is MISWIKGELV…EDSDMLFGFS (71 aa). A domain II region spans residues 72–150; the sequence is TKDQRDFFIQ…NKEIEKENLN (79 aa). The flexible linker stretch occupies residues 151-161; sequence INNFLEKNKDL. Residues 161–219 form a domain III region; sequence LDSIFKDIDLTLQSLNYSKKEIKNLFPKLINNIKNSSLEKESISFENLLKEAMNYLDHK.

Belongs to the RuvA family. In terms of assembly, homotetramer. Forms an RuvA(8)-RuvB(12)-Holliday junction (HJ) complex. HJ DNA is sandwiched between 2 RuvA tetramers; dsDNA enters through RuvA and exits via RuvB. An RuvB hexamer assembles on each DNA strand where it exits the tetramer. Each RuvB hexamer is contacted by two RuvA subunits (via domain III) on 2 adjacent RuvB subunits; this complex drives branch migration. In the full resolvosome a probable DNA-RuvA(4)-RuvB(12)-RuvC(2) complex forms which resolves the HJ.

It is found in the cytoplasm. Its function is as follows. The RuvA-RuvB-RuvC complex processes Holliday junction (HJ) DNA during genetic recombination and DNA repair, while the RuvA-RuvB complex plays an important role in the rescue of blocked DNA replication forks via replication fork reversal (RFR). RuvA specifically binds to HJ cruciform DNA, conferring on it an open structure. The RuvB hexamer acts as an ATP-dependent pump, pulling dsDNA into and through the RuvAB complex. HJ branch migration allows RuvC to scan DNA until it finds its consensus sequence, where it cleaves and resolves the cruciform DNA. The protein is Holliday junction branch migration complex subunit RuvA of Prochlorococcus marinus subsp. pastoris (strain CCMP1986 / NIES-2087 / MED4).